The following is a 421-amino-acid chain: ATP-dependent RNA helicase RhlB (421 aa).

The Q motif motif lies at 9-37 (QKFSDFALHPKVVEALEKKGFHNCTPIQA). One can recognise a Helicase ATP-binding domain in the interval 40–219 (LPLTLAGRDV…FEQMNNAEYI (180 aa)). 53–60 (AQTGTGKT) contacts ATP. The DEAD box motif lies at 165–168 (DEAD). A Helicase C-terminal domain is found at 245–390 (RLLQTLIEEE…VSKYNPDALM (146 aa)). Residues 392–421 (DLPKPLRLTRPRTGNGPRRTGAPRNRRRSG) are disordered. Low complexity predominate over residues 402-414 (PRTGNGPRRTGAP).

The protein belongs to the DEAD box helicase family. RhlB subfamily. Component of the RNA degradosome, which is a multiprotein complex involved in RNA processing and mRNA degradation.

It localises to the cytoplasm. It carries out the reaction ATP + H2O = ADP + phosphate + H(+). DEAD-box RNA helicase involved in RNA degradation. Has RNA-dependent ATPase activity and unwinds double-stranded RNA. This Escherichia coli O139:H28 (strain E24377A / ETEC) protein is ATP-dependent RNA helicase RhlB.